The chain runs to 674 residues: DNA ligase (674 aa).

NAD(+) is bound by residues D34–D38, S83–L84, and E114. K116 functions as the N6-AMP-lysine intermediate in the catalytic mechanism. R137, E174, K290, and K314 together coordinate NAD(+). Zn(2+) contacts are provided by C405, C408, C424, and C429. In terms of domain architecture, BRCT spans Q587–F674.

Belongs to the NAD-dependent DNA ligase family. LigA subfamily. Mg(2+) is required as a cofactor. The cofactor is Mn(2+).

It carries out the reaction NAD(+) + (deoxyribonucleotide)n-3'-hydroxyl + 5'-phospho-(deoxyribonucleotide)m = (deoxyribonucleotide)n+m + AMP + beta-nicotinamide D-nucleotide.. Functionally, DNA ligase that catalyzes the formation of phosphodiester linkages between 5'-phosphoryl and 3'-hydroxyl groups in double-stranded DNA using NAD as a coenzyme and as the energy source for the reaction. It is essential for DNA replication and repair of damaged DNA. The chain is DNA ligase from Endomicrobium trichonymphae.